The sequence spans 715 residues: Coiled-coil domain-containing protein 13 (715 aa).

Coiled coils occupy residues 16–105 (KAMQ…KERD) and 134–458 (ATKI…NVHY). Residues 20–65 (EMQHKRLQKQMEKKREKELSLKSRADDQEEPLEVSDGLSLLHAGEP) are disordered. Over residues 28 to 45 (KQMEKKREKELSLKSRAD) the composition is skewed to basic and acidic residues. Phosphoserine occurs at positions 258, 469, and 536. 2 disordered regions span residues 482–541 (EDPG…EQKG) and 607–645 (LEPGKASASQRAAPRTKTGLPTSNNRHNPTGSEKKDPSF). Positions 554–608 (QAAEVERDRLTEFVTVLQKRVEESNSKLLESERKLQEERHRTVVLEQHLEKIRLE) form a coiled coil. Residues 625–637 (GLPTSNNRHNPTG) show a composition bias toward polar residues. Positions 653–683 (VESQMEELTTRLAIQVEENEMLKAALGSALR) form a coiled coil.

As to quaternary structure, interacts with PCM1, CEP290 and PCNT.

The protein resides in the cytoplasm. It localises to the cytoskeleton. Its subcellular location is the microtubule organizing center. It is found in the centrosome. The protein localises to the centriolar satellite. The protein resides in the cilium basal body. Its function is as follows. Required for primary cilia formation and promotes the localization of the ciliopathy protein BBS4 to both centriolar satellites and cilia. This Homo sapiens (Human) protein is Coiled-coil domain-containing protein 13.